Here is a 405-residue protein sequence, read N- to C-terminus: Dynactin subunit 2 (405 aa).

Residues 1–24 (MADPKYADLPGIARNEPDVYETSD) form a disordered region. The stretch at 101 to 134 (PQQKYQRLLHEIQELTQEVEKAQSTVKESAAEEK) forms a coiled coil. Positions 186 to 207 (AKTRKNPEGKSPAKGPGPDNEN) are disordered. Residues 383–403 (KENLATVEDNFTSIDARIKKL) adopt a coiled-coil conformation.

Belongs to the dynactin subunit 2 family. As to quaternary structure, subunit of dynactin, a multiprotein complex part of a tripartite complex with dynein and a adapter, such as BICDL1, BICD2 or HOOK3. The dynactin complex is built around ACTR1A/ACTB filament and consists of an actin-related filament composed of a shoulder domain, a pointed end and a barbed end. Its length is defined by its flexible shoulder domain. The soulder is composed of 2 DCTN1 subunits, 4 DCTN2 and 2 DCTN3.

It is found in the cytoplasm. It localises to the cytoskeleton. Its subcellular location is the microtubule organizing center. The protein localises to the centrosome. The protein resides in the membrane. Its function is as follows. Part of the dynactin complex that activates the molecular motor dynein for ultra-processive transport along microtubules. In the dynactin soulder domain, binds the ACTR1A filament and acts as a molecular ruler to determine the length. Modulates cytoplasmic dynein binding to an organelle, and plays a role in prometaphase chromosome alignment and spindle organization during mitosis. Involved in anchoring microtubules to centrosomes. In Xenopus tropicalis (Western clawed frog), this protein is Dynactin subunit 2 (dctn2).